The sequence spans 108 residues: Translation initiation factor 1A (108 aa).

An S1-like domain is found at 11 to 85 (PSRDVPRPEE…NRCDILYKYG (75 aa)).

The protein belongs to the eIF-1A family.

Seems to be required for maximal rate of protein biosynthesis. Enhances ribosome dissociation into subunits and stabilizes the binding of the initiator Met-tRNA(I) to 40 S ribosomal subunits. The chain is Translation initiation factor 1A (eIF1A) from Saccharolobus solfataricus (strain ATCC 35092 / DSM 1617 / JCM 11322 / P2) (Sulfolobus solfataricus).